We begin with the raw amino-acid sequence, 90 residues long: Probable Fe(2+)-trafficking protein (90 aa).

The protein belongs to the Fe(2+)-trafficking protein family. As to quaternary structure, monomer.

Functionally, could be a mediator in iron transactions between iron acquisition and iron-requiring processes, such as synthesis and/or repair of Fe-S clusters in biosynthetic enzymes. This Pectobacterium atrosepticum (strain SCRI 1043 / ATCC BAA-672) (Erwinia carotovora subsp. atroseptica) protein is Probable Fe(2+)-trafficking protein.